We begin with the raw amino-acid sequence, 69 residues long: Conotoxin Eb6.21 (69 aa).

Residues 1–17 (VLIIAVLFLTACQLTTA) form the signal peptide. Residues 18–41 (ETYSRGRQKHRARRSTDKNSKWTR) constitute a propeptide that is removed on maturation. Intrachain disulfides connect C43-C57, C50-C61, and C56-C68.

It belongs to the conotoxin O1 superfamily. Expressed by the venom duct.

It localises to the secreted. This is Conotoxin Eb6.21 (E1) from Conus ebraeus (Hebrew cone).